The chain runs to 128 residues: Glycine cleavage system H protein (128 aa).

The 83-residue stretch at 24 to 106 (VATVGITAFA…YNNGWLLKIK (83 aa)) folds into the Lipoyl-binding domain. The residue at position 65 (K65) is an N6-lipoyllysine.

It belongs to the GcvH family. As to quaternary structure, the glycine cleavage system is composed of four proteins: P, T, L and H. (R)-lipoate is required as a cofactor.

Its function is as follows. The glycine cleavage system catalyzes the degradation of glycine. The H protein shuttles the methylamine group of glycine from the P protein to the T protein. This is Glycine cleavage system H protein from Acaryochloris marina (strain MBIC 11017).